The primary structure comprises 251 residues: E3 ubiquitin-protein ligase MARCHF3 (251 aa).

The RING-CH-type zinc finger occupies 61–121; the sequence is QSFNDRPMCR…ELCHFRFSVE (61 aa). 8 residues coordinate Zn(2+): cysteine 69, cysteine 72, cysteine 85, cysteine 87, histidine 95, cysteine 98, cysteine 111, and cysteine 114. The next 2 membrane-spanning stretches (helical) occupy residues 143–163 and 180–200; these read LFGD…SGWL and AVGL…WTLV.

The protein resides in the cytoplasmic vesicle membrane. It is found in the early endosome membrane. It carries out the reaction S-ubiquitinyl-[E2 ubiquitin-conjugating enzyme]-L-cysteine + [acceptor protein]-L-lysine = [E2 ubiquitin-conjugating enzyme]-L-cysteine + N(6)-ubiquitinyl-[acceptor protein]-L-lysine.. It functions in the pathway protein modification; protein ubiquitination. In terms of biological role, E3 ubiquitin-protein ligase which may be involved in endosomal trafficking. E3 ubiquitin ligases accept ubiquitin from an E2 ubiquitin-conjugating enzyme in the form of a thioester and then directly transfer the ubiquitin to targeted substrates. The sequence is that of E3 ubiquitin-protein ligase MARCHF3 (marchf3) from Xenopus tropicalis (Western clawed frog).